The following is a 376-amino-acid chain: tRNA-specific 2-thiouridylase MnmA (376 aa).

ATP-binding positions include 14–21 (GMSGGVDS) and Met-40. The segment at 100-102 (NPD) is interaction with target base in tRNA. Residue Cys-105 is the Nucleophile of the active site. Cys-105 and Cys-202 are disulfide-bonded. Gly-129 lines the ATP pocket. The tract at residues 152–154 (KDQ) is interaction with tRNA. The active-site Cysteine persulfide intermediate is Cys-202. The segment at 315–316 (RY) is interaction with tRNA.

It belongs to the MnmA/TRMU family.

The protein localises to the cytoplasm. It carries out the reaction S-sulfanyl-L-cysteinyl-[protein] + uridine(34) in tRNA + AH2 + ATP = 2-thiouridine(34) in tRNA + L-cysteinyl-[protein] + A + AMP + diphosphate + H(+). In terms of biological role, catalyzes the 2-thiolation of uridine at the wobble position (U34) of tRNA, leading to the formation of s(2)U34. The sequence is that of tRNA-specific 2-thiouridylase MnmA from Lactococcus lactis subsp. cremoris (strain MG1363).